We begin with the raw amino-acid sequence, 410 residues long: PHAF1 protein At3g51130 (410 aa).

Belongs to the PHAF1 family.

In Arabidopsis thaliana (Mouse-ear cress), this protein is PHAF1 protein At3g51130.